A 451-amino-acid polypeptide reads, in one-letter code: Phosphoglucosamine mutase (451 aa).

The Phosphoserine intermediate role is filled by Ser-101. Positions 101, 240, 242, and 244 each coordinate Mg(2+). A Phosphoserine modification is found at Ser-101.

Belongs to the phosphohexose mutase family. Mg(2+) serves as cofactor. Activated by phosphorylation.

It carries out the reaction alpha-D-glucosamine 1-phosphate = D-glucosamine 6-phosphate. Its function is as follows. Catalyzes the conversion of glucosamine-6-phosphate to glucosamine-1-phosphate. The polypeptide is Phosphoglucosamine mutase (Streptococcus pyogenes serotype M3 (strain SSI-1)).